The primary structure comprises 352 residues: Holliday junction branch migration complex subunit RuvB (352 aa).

The large ATPase domain (RuvB-L) stretch occupies residues 5 to 191 (TDDFSEQRVI…FGIVARLEFY (187 aa)). ATP is bound by residues Leu-30, Arg-31, Gly-72, Lys-75, Thr-76, Thr-77, 138 to 140 (EDY), Arg-181, Tyr-191, and Arg-228. Thr-76 is a Mg(2+) binding site. Residues 192-262 (TPLELTRIVT…MADAALVMLD (71 aa)) form a small ATPAse domain (RuvB-S) region. Positions 265 to 352 (PVGFDVMDRK…GPNGELWGGQ (88 aa)) are head domain (RuvB-H). Arg-301, Arg-320, and Arg-325 together coordinate DNA.

It belongs to the RuvB family. Homohexamer. Forms an RuvA(8)-RuvB(12)-Holliday junction (HJ) complex. HJ DNA is sandwiched between 2 RuvA tetramers; dsDNA enters through RuvA and exits via RuvB. An RuvB hexamer assembles on each DNA strand where it exits the tetramer. Each RuvB hexamer is contacted by two RuvA subunits (via domain III) on 2 adjacent RuvB subunits; this complex drives branch migration. In the full resolvosome a probable DNA-RuvA(4)-RuvB(12)-RuvC(2) complex forms which resolves the HJ.

It is found in the cytoplasm. The enzyme catalyses ATP + H2O = ADP + phosphate + H(+). The RuvA-RuvB-RuvC complex processes Holliday junction (HJ) DNA during genetic recombination and DNA repair, while the RuvA-RuvB complex plays an important role in the rescue of blocked DNA replication forks via replication fork reversal (RFR). RuvA specifically binds to HJ cruciform DNA, conferring on it an open structure. The RuvB hexamer acts as an ATP-dependent pump, pulling dsDNA into and through the RuvAB complex. RuvB forms 2 homohexamers on either side of HJ DNA bound by 1 or 2 RuvA tetramers; 4 subunits per hexamer contact DNA at a time. Coordinated motions by a converter formed by DNA-disengaged RuvB subunits stimulates ATP hydrolysis and nucleotide exchange. Immobilization of the converter enables RuvB to convert the ATP-contained energy into a lever motion, pulling 2 nucleotides of DNA out of the RuvA tetramer per ATP hydrolyzed, thus driving DNA branch migration. The RuvB motors rotate together with the DNA substrate, which together with the progressing nucleotide cycle form the mechanistic basis for DNA recombination by continuous HJ branch migration. Branch migration allows RuvC to scan DNA until it finds its consensus sequence, where it cleaves and resolves cruciform DNA. This chain is Holliday junction branch migration complex subunit RuvB, found in Herminiimonas arsenicoxydans.